The primary structure comprises 123 residues: uncharacterized protein (123 aa).

A compositionally biased stretch (polar residues) spans 1 to 12 (MALNNVSLSSGD). Disordered stretches follow at residues 1–25 (MALN…SHGD) and 53–91 (PRQA…RFSP). The segment covering 61–82 (VRAESRRVDGGGRSPREPDGRG) has biased composition (basic and acidic residues).

This is an uncharacterized protein from Homo sapiens (Human).